Here is a 116-residue protein sequence, read N- to C-terminus: U16-barytoxin-Tl1d (116 aa).

A signal peptide spans 1–20 (MKTIIVFLSLLVLATKFGDA). A propeptide spanning residues 21-74 (NEGVNQEQMKEVIQNEFREDFLNEMAAMSLLQQLEAIESTLLEKEADRNSRQKR) is cleaved from the precursor. 3 cysteine pairs are disulfide-bonded: Cys-75–Cys-90, Cys-82–Cys-95, and Cys-89–Cys-110.

This sequence belongs to the neurotoxin 14 (magi-1) family. 06 (ICK-Trit) subfamily. As to expression, expressed by the venom gland.

Its subcellular location is the secreted. Ion channel inhibitor. This is U16-barytoxin-Tl1d from Trittame loki (Brush-footed trapdoor spider).